A 408-amino-acid polypeptide reads, in one-letter code: 3-phosphoshikimate 1-carboxyvinyltransferase (408 aa).

3 residues coordinate 3-phosphoshikimate: Lys-10, Ser-11, and Arg-15. Lys-10 is a phosphoenolpyruvate binding site. Residues Gly-79 and Arg-107 each contribute to the phosphoenolpyruvate site. Positions 150, 151, 152, 179, 297, and 324 each coordinate 3-phosphoshikimate. Phosphoenolpyruvate is bound at residue Gln-152. The active-site Proton acceptor is the Glu-297. Residues Arg-328, Arg-369, and Lys-394 each contribute to the phosphoenolpyruvate site.

The protein belongs to the EPSP synthase family. As to quaternary structure, monomer.

It is found in the cytoplasm. It catalyses the reaction 3-phosphoshikimate + phosphoenolpyruvate = 5-O-(1-carboxyvinyl)-3-phosphoshikimate + phosphate. It functions in the pathway metabolic intermediate biosynthesis; chorismate biosynthesis; chorismate from D-erythrose 4-phosphate and phosphoenolpyruvate: step 6/7. In terms of biological role, catalyzes the transfer of the enolpyruvyl moiety of phosphoenolpyruvate (PEP) to the 5-hydroxyl of shikimate-3-phosphate (S3P) to produce enolpyruvyl shikimate-3-phosphate and inorganic phosphate. This Corynebacterium efficiens (strain DSM 44549 / YS-314 / AJ 12310 / JCM 11189 / NBRC 100395) protein is 3-phosphoshikimate 1-carboxyvinyltransferase.